The primary structure comprises 733 residues: Protein ROG3 (733 aa).

The short motif at 460 to 463 is the PY-motif element; it reads PPNY. Residues 518–566 form a disordered region; sequence RDNLGLPPSASSAAASRSLSPLLNVPAPEDGTERILPQSALGPNSGSVP. Low complexity predominate over residues 523 to 540; that stretch reads LPPSASSAAASRSLSPLL. A PY-motif motif is present at residues 625–628; that stretch reads PPSY. 2 disordered regions span residues 636–658 and 693–733; these read QPRK…SIPT and ELTS…GNKR. Residues 646–658 show a composition bias toward low complexity; the sequence is RNSSTTLSSSIPT.

This sequence belongs to the arrestin family. Interacts with RSP5 via its 2 PY-motifs.

In terms of biological role, involved in resistance to GST substrate o-dinitrobenzene (o-DNB). In Saccharomyces cerevisiae (strain ATCC 204508 / S288c) (Baker's yeast), this protein is Protein ROG3 (ROG3).